A 465-amino-acid polypeptide reads, in one-letter code: tRNA modification GTPase MnmE (465 aa).

(6S)-5-formyl-5,6,7,8-tetrahydrofolate is bound by residues R30, E92, and R132. Positions 227–388 constitute a TrmE-type G domain; that stretch reads GLQVALVGRP…LIEAVLKTCG (162 aa). Residue N237 participates in K(+) binding. Residues 237–242, 256–262, 281–284, and 342–345 each bind GTP; these read NVGKSS, TDLPGTT, DTAG, and NKAD. A Mg(2+)-binding site is contributed by S241. The K(+) site is built by T256, L258, and T261. A Mg(2+)-binding site is contributed by T262. K465 lines the (6S)-5-formyl-5,6,7,8-tetrahydrofolate pocket.

This sequence belongs to the TRAFAC class TrmE-Era-EngA-EngB-Septin-like GTPase superfamily. TrmE GTPase family. In terms of assembly, homodimer. Heterotetramer of two MnmE and two MnmG subunits. K(+) is required as a cofactor.

The protein localises to the cytoplasm. In terms of biological role, exhibits a very high intrinsic GTPase hydrolysis rate. Involved in the addition of a carboxymethylaminomethyl (cmnm) group at the wobble position (U34) of certain tRNAs, forming tRNA-cmnm(5)s(2)U34. This Prochlorococcus marinus (strain MIT 9303) protein is tRNA modification GTPase MnmE.